The primary structure comprises 470 residues: UDP-N-acetylmuramoylalanine--D-glutamate ligase (470 aa).

Residue 121–127 (GTNGKST) participates in ATP binding.

It belongs to the MurCDEF family.

The protein resides in the cytoplasm. It catalyses the reaction UDP-N-acetyl-alpha-D-muramoyl-L-alanine + D-glutamate + ATP = UDP-N-acetyl-alpha-D-muramoyl-L-alanyl-D-glutamate + ADP + phosphate + H(+). It participates in cell wall biogenesis; peptidoglycan biosynthesis. Functionally, cell wall formation. Catalyzes the addition of glutamate to the nucleotide precursor UDP-N-acetylmuramoyl-L-alanine (UMA). This chain is UDP-N-acetylmuramoylalanine--D-glutamate ligase, found in Rhizobium etli (strain ATCC 51251 / DSM 11541 / JCM 21823 / NBRC 15573 / CFN 42).